A 476-amino-acid polypeptide reads, in one-letter code: Monofunctional riboflavin biosynthesis protein RIBA 2, chloroplastic (476 aa).

The transit peptide at 1-54 (MASLTLRCDSTHLLPSRDVVKGTKPFGTSLVYPRIISKKFNVRMRVIPEEGDVF) directs the protein to the chloroplast. The tract at residues 44–306 (MRVIPEEGDV…IADLIRYRRK (263 aa)) is DHBP synthase. D-ribulose 5-phosphate is bound by residues 130 to 131 (RE), Asp135, 245 to 249 (RAGHT), and Glu269. Residue Glu131 coordinates Mg(2+). Position 248 (His248) interacts with Mg(2+). Residues 307-476 (RERLVEFTAV…SGKVPLITTP (170 aa)) form an inactive GTP cyclohydrolase II region. GTP is bound by residues 357–361 (RVHAE), Gln376, 399–401 (ESK), and Thr450.

This sequence in the N-terminal section; belongs to the DHBP synthase family. In the C-terminal section; belongs to the GTP cyclohydrolase II family. Mg(2+) is required as a cofactor. It depends on Mn(2+) as a cofactor. In terms of tissue distribution, expressed in leaves, shoots, roots, flowers and siliques.

The protein localises to the plastid. Its subcellular location is the chloroplast. The catalysed reaction is D-ribulose 5-phosphate = (2S)-2-hydroxy-3-oxobutyl phosphate + formate + H(+). It functions in the pathway cofactor biosynthesis; riboflavin biosynthesis; 2-hydroxy-3-oxobutyl phosphate from D-ribulose 5-phosphate: step 1/1. In terms of biological role, involved in riboflavin biosynthesis. Catalyzes the conversion of D-ribulose 5-phosphate to formate and 3,4-dihydroxy-2-butanone 4-phosphate. RIBA2 and RIBA3 together are not able to complement the loss of function of RIBA1. This is Monofunctional riboflavin biosynthesis protein RIBA 2, chloroplastic (RIBA2) from Arabidopsis thaliana (Mouse-ear cress).